The primary structure comprises 756 residues: 1,4-alpha-glucan branching enzyme GlgB (756 aa).

Asp425 serves as the catalytic Nucleophile. Glu478 serves as the catalytic Proton donor.

The protein belongs to the glycosyl hydrolase 13 family. GlgB subfamily. In terms of assembly, monomer.

It carries out the reaction Transfers a segment of a (1-&gt;4)-alpha-D-glucan chain to a primary hydroxy group in a similar glucan chain.. The protein operates within glycan biosynthesis; glycogen biosynthesis. Catalyzes the formation of the alpha-1,6-glucosidic linkages in glycogen by scission of a 1,4-alpha-linked oligosaccharide from growing alpha-1,4-glucan chains and the subsequent attachment of the oligosaccharide to the alpha-1,6 position. The chain is 1,4-alpha-glucan branching enzyme GlgB from Cupriavidus necator (strain ATCC 17699 / DSM 428 / KCTC 22496 / NCIMB 10442 / H16 / Stanier 337) (Ralstonia eutropha).